Reading from the N-terminus, the 278-residue chain is ABC transporter I family member 11, chloroplastic (278 aa).

The N-terminal 49 residues, 1-49 (MAVSTFSSPTPVFGIAEPPASFSSTAIGWKQPLRFRRTKKPRVISCDYS), are a transit peptide targeting the chloroplast. The 228-residue stretch at 51 to 278 (IEVRDVCYRP…GVLVAERPPL (228 aa)) folds into the ABC transporter domain. 85–92 (GKSGSGKT) lines the ATP pocket.

This sequence belongs to the ABC transporter superfamily. ABCI family.

Its subcellular location is the plastid. It localises to the chloroplast. The chain is ABC transporter I family member 11, chloroplastic (ABCI11) from Arabidopsis thaliana (Mouse-ear cress).